Here is a 379-residue protein sequence, read N- to C-terminus: Omega-3 fatty acid desaturase, endoplasmic reticulum (379 aa).

The helical transmembrane segment at 52–72 (LSYVVRDVIFVATLIGIAIHL) threads the bilayer. The short motif at 97–101 (HDCGH) is the Histidine box-1 element. Positions 133-137 (HKTHH) match the Histidine box-2 motif. A run of 2 helical transmembrane segments spans residues 213 to 233 (TLCW…FGSL) and 236 to 256 (FKIY…VTYL). The Histidine box-3 signature appears at 300-304 (HVIHH).

The protein belongs to the fatty acid desaturase type 1 family.

The protein resides in the endoplasmic reticulum membrane. Its pathway is lipid metabolism; polyunsaturated fatty acid biosynthesis. In terms of biological role, ER (microsomal) omega-3 fatty acid desaturase introduces the third double bond in the biosynthesis of 18:3 fatty acids, important constituents of plant membranes. It is thought to use cytochrome b5 as an electron donor and to act on fatty acids esterified to phosphatidylcholine and, possibly, other phospholipids. The polypeptide is Omega-3 fatty acid desaturase, endoplasmic reticulum (FAD3) (Nicotiana tabacum (Common tobacco)).